Reading from the N-terminus, the 85-residue chain is UPF0386 protein Plav_1374 (85 aa).

Belongs to the UPF0386 family.

This Parvibaculum lavamentivorans (strain DS-1 / DSM 13023 / NCIMB 13966) protein is UPF0386 protein Plav_1374.